The sequence spans 309 residues: Mannitol-1-phosphatase (309 aa).

The Tele-phosphohistidine intermediate role is filled by His-82. Glu-166 (proton donor/acceptor) is an active-site residue.

It belongs to the phosphoglycerate mutase family.

The catalysed reaction is D-mannitol 1-phosphate + H2O = D-mannitol + phosphate. By diethyl pyrocarbonate (DEPC). In terms of biological role, key enzyme for mannitol biosynthesis. The chain is Mannitol-1-phosphatase from Eimeria tenella (Coccidian parasite).